A 308-amino-acid polypeptide reads, in one-letter code: Oxygen-dependent coproporphyrinogen-III oxidase (308 aa).

Serine 100 is a binding site for substrate. Residues histidine 104 and histidine 114 each contribute to the a divalent metal cation site. The active-site Proton donor is histidine 114. Position 116–118 (116–118 (NFR)) interacts with substrate. Residues histidine 153 and histidine 183 each contribute to the a divalent metal cation site. The important for dimerization stretch occupies residues 248–283 (YVEFNLVFDRGTIFGLQSGGRTESILSSMPPMATWK). 266 to 268 (GGR) contributes to the substrate binding site.

This sequence belongs to the aerobic coproporphyrinogen-III oxidase family. As to quaternary structure, homodimer. Requires a divalent metal cation as cofactor.

Its subcellular location is the cytoplasm. It carries out the reaction coproporphyrinogen III + O2 + 2 H(+) = protoporphyrinogen IX + 2 CO2 + 2 H2O. It functions in the pathway porphyrin-containing compound metabolism; protoporphyrin-IX biosynthesis; protoporphyrinogen-IX from coproporphyrinogen-III (O2 route): step 1/1. Its function is as follows. Involved in the heme biosynthesis. Catalyzes the aerobic oxidative decarboxylation of propionate groups of rings A and B of coproporphyrinogen-III to yield the vinyl groups in protoporphyrinogen-IX. In Francisella tularensis subsp. holarctica (strain OSU18), this protein is Oxygen-dependent coproporphyrinogen-III oxidase.